A 262-amino-acid chain; its full sequence is Tetratricopeptide repeat protein 33 (262 aa).

TPR repeat units follow at residues 59 to 92, 93 to 126, and 127 to 160; these read SKQL…TPND, ATLY…NPHS, and WESW…YPMN. Ser-197 carries the phosphoserine modification. Thr-251 bears the Phosphothreonine mark.

The chain is Tetratricopeptide repeat protein 33 (TTC33) from Homo sapiens (Human).